We begin with the raw amino-acid sequence, 1313 residues long: Ataxin-2 (1313 aa).

Residues 1 to 12 (MRSAAAAPRSPA) are compositionally biased toward low complexity. A disordered region spans residues 1–255 (MRSAAAAPRS…RNSNKGLPQS (255 aa)). Over residues 48–65 (GPYPSAAPPPPGPGPPPS) the composition is skewed to pro residues. Composition is skewed to low complexity over residues 104–114 (FVVLLLPLASP), 141–154 (ARPAPGCPRPACEP), 166–187 (QQQQQQQQQQQQQQQQQQQQQQ), and 204–234 (LLASPAAAPSPSSSSVSSSSATAPSSVVAAT). Gly residues predominate over residues 235–244 (SGGGRPGLGR). At Ser-248 the chain carries Phosphoserine. Residues 267–344 (RMVHILTSVV…FVVVQFKDMD (78 aa)) form the Sm domain. Phosphoserine is present on residues Ser-393, Ser-466, Ser-478, Ser-508, and Ser-554. 2 stretches are compositionally biased toward basic and acidic residues: residues 459 to 471 (ALENDDRSEEEKY) and 478 to 492 (SSEREGHSINTRENK). Disordered stretches follow at residues 459–954 (ALEN…HQQP) and 1137–1219 (NATL…NSFP). Positions 508-544 (SGRQNSPRMGQPGSGSMPSRSTSHTSDFNPNSGSDQR) are enriched in polar residues. Pro residues predominate over residues 552–562 (WPSPCPSPSSR). The segment covering 563 to 581 (PPSRYQSGPNSLPPRAATP) has biased composition (low complexity). Pro residues predominate over residues 582-598 (TRPPSRPPSRPSRPPSH). Ser-624 bears the Phosphoserine mark. The segment covering 627 to 637 (AQRHPRNHRVS) has biased composition (basic residues). The residue at position 640 (Arg-640) is an Asymmetric dimethylarginine; alternate. Omega-N-methylarginine; alternate is present on Arg-640. The residue at position 642 (Ser-642) is a Phosphoserine. Positions 666-681 (TSPSGGTWSSVVSGVP) are enriched in low complexity. Ser-684 carries the post-translational modification Phosphoserine. A compositionally biased stretch (polar residues) spans 693–703 (PRQNSIGNTPS). Ser-728 is subject to Phosphoserine. Residue Thr-741 is modified to Phosphothreonine. Residues 768–777 (PNETSPSFSK) show a composition bias toward polar residues. Ser-772 and Ser-784 each carry phosphoserine. Positions 788-804 (SEHRKQIDDLKKFKNDF) are enriched in basic and acidic residues. Positions 807–820 (QPSSTSESMDQLLN) are enriched in polar residues. Residues 821–844 (KNREGEKSRDLIKDKIEPSAKDSF) are compositionally biased toward basic and acidic residues. The segment covering 847 to 871 (NSSSNCTSGSSKPNSPSISPSILSN) has biased composition (low complexity). 7 positions are modified to phosphoserine: Ser-856, Ser-857, Ser-861, Ser-865, Ser-867, Ser-888, and Ser-889. Residues 880-891 (VTSQGVQTSSPA) are compositionally biased toward polar residues. Lys-893 participates in a covalent cross-link: Glycyl lysine isopeptide (Lys-Gly) (interchain with G-Cter in SUMO2). Over residues 893 to 910 (KQEKDDKEEKKDAAEQVR) the composition is skewed to basic and acidic residues. Low complexity-rich tracts occupy residues 925–936 (SFSQPKPSTTPT) and 1155–1192 (GQQQSQHGGSHPAPSPVQHHQHQAAQALHLASPQQQSA). Polar residues predominate over residues 1206–1219 (TPASNTQSPQNSFP).

It belongs to the ataxin-2 family. As to quaternary structure, monomer. Can also form homodimers. Interacts with TARDBP; the interaction is RNA-dependent. Interacts with RBFOX1. Interacts with polyribosomes. Interacts with SH3GL2 and SH3GL3. Interacts with SH3KBP1 and CBL. Interacts with EGFR. Interacts with ATXN2L. Expressed in the brain, heart, liver, skeletal muscle, pancreas and placenta. Isoform 1 is predominant in the brain and spinal cord. Isoform 4 is more abundant in the cerebellum. In the brain, broadly expressed in the amygdala, caudate nucleus, corpus callosum, hippocampus, hypothalamus, substantia nigra, subthalamic nucleus and thalamus.

It localises to the cytoplasm. Involved in EGFR trafficking, acting as negative regulator of endocytic EGFR internalization at the plasma membrane. This is Ataxin-2 (ATXN2) from Homo sapiens (Human).